We begin with the raw amino-acid sequence, 525 residues long: Heat shock factor protein 1 (525 aa).

At Met1 the chain carries N-acetylmethionine. The DNA-binding domain stretch occupies residues 15 to 120 (VPAFLTKLWT…LLENIKRKVT (106 aa)). The residue at position 80 (Lys80) is an N6-acetyllysine. Lys91 carries the N6-acetyllysine; alternate modification. Lys91 participates in a covalent cross-link: Glycyl lysine isopeptide (Lys-Gly) (interchain with G-Cter in SUMO2); alternate. Lys118 is modified (N6-acetyllysine). Ser121 bears the Phosphoserine; by MAPKAPK2 mark. Glycyl lysine isopeptide (Lys-Gly) (interchain with G-Cter in SUMO2) cross-links involve residues Lys126 and Lys131. Residues 130–203 (IKIRQDSVTR…ISLVQSNRIL (74 aa)) are hydrophobic repeat HR-A/B. Thr142 is subject to Phosphothreonine; by CK2. An N6-acetyllysine mark is found at Lys150 and Lys188. Positions 203 to 224 (LGVKRKIPLMLSDSNSAHSVPK) are d domain. Lys208 carries the N6-acetyllysine; alternate modification. Lys208 participates in a covalent cross-link: Glycyl lysine isopeptide (Lys-Gly) (interchain with G-Cter in SUMO2); alternate. The residue at position 216 (Ser216) is a Phosphoserine; by PLK1. The segment at 221-310 (SVPKYGRQYS…PPSPPHSPRV (90 aa)) is regulatory domain. Lys224 is covalently cross-linked (Glycyl lysine isopeptide (Lys-Gly) (interchain with G-Cter in SUMO2)). At Ser230 the chain carries Phosphoserine; by CAMK2A. Disordered regions lie at residues 272–327 (APTS…PLSP) and 340–365 (PTPA…TPST). A phosphoserine mark is found at Ser275 and Ser292. Lys298 is modified (N6-acetyllysine; alternate). Residue Lys298 forms a Glycyl lysine isopeptide (Lys-Gly) (interchain with G-Cter in SUMO2); alternate linkage. Lys298 is covalently cross-linked (Glycyl lysine isopeptide (Lys-Gly) (interchain with G-Cter in SUMO); alternate). Phosphoserine occurs at positions 303, 307, 314, and 319. Ser320 is subject to Phosphoserine; by PKA. Residue Thr323 is modified to Phosphothreonine. Position 326 is a phosphoserine; by MAPK12 (Ser326). Residues 343-355 (AASNTAPMDTTGA) are compositionally biased toward polar residues. Phosphoserine is present on Ser345. The interval 367-525 (EKCLSVACLD…PHKAKDPTVS (159 aa)) is transactivation domain. Residues 380-405 (LSDHLDAMDSNLDNLQTMLTSHGFSV) form a hydrophobic repeat HR-C region. The short motif at 408–416 (SALLDLFSP) is the 9aaTAD element. Ser415 carries the phosphoserine; by PLK1 modification. Position 440 is a phosphoserine (Ser440). 2 disordered regions span residues 441–460 (PQEP…SGKQ) and 495–525 (YFSE…PTVS). Residues 515–525 (EPHKAKDPTVS) show a composition bias toward basic and acidic residues. Lys520 bears the N6-acetyllysine mark.

Belongs to the HSF family. In terms of assembly, monomer; cytoplasmic latent and transcriptionally inactive monomeric form in unstressed cells. Homotrimer; in response to stress, such as heat shock, homotrimerizes and translocates into the nucleus, binds to heat shock element (HSE) sequences in promoter of heat shock protein (HSP) genes and acquires transcriptional ability. Interacts (via monomeric form) with FKBP4; this interaction occurs in unstressed cells. Associates (via monomeric form) with HSP90 proteins in a multichaperone complex in unnstressed cell; this association maintains HSF1 in a non-DNA-binding and transcriptional inactive form by preventing HSF1 homotrimerization. Homotrimeric transactivation activity is modulated by protein-protein interactions and post-translational modifications. Interacts with HSP90AA1; this interaction is decreased in a IER5-dependent manner, promoting HSF1 accumulation in the nucleus, homotrimerization and DNA-binding activities. Part (via regulatory domain in the homotrimeric form) of a large heat shock-induced HSP90-dependent multichaperone complex at least composed of FKBP4, FKBP5, HSP90 proteins, PPID, PPP5C and PTGES3; this association maintains the HSF1 homotrimeric DNA-bound form in a transcriptionally inactive form. Interacts with BAG3 (via BAG domain); this interaction occurs in normal and heat-shocked cells promoting nuclear shuttling of HSF1 in a BAG3-dependent manner. Interacts (via homotrimeric and hyperphosphorylated form) with FKBP4; this interaction occurs upon heat shock in a HSP90-dependent multichaperone complex. Interacts (via homotrimeric form preferentially) with EEF1A proteins. In heat shocked cells, stress-denatured proteins compete with HSF1 homotrimeric DNA-bound form for association of the HSP90-dependent multichaperone complex, and hence alleviating repression of HSF1-mediated transcriptional activity. Interacts (via homotrimeric form preferentially) with DAXX; this interaction relieves homotrimeric HSF1 from repression of its transcriptional activity by HSP90-dependent multichaperone complex upon heat shock. Interacts (via D domain and preferentially with hyperphosphorylated form) with JNK1; this interaction occurs under both normal growth conditions and immediately upon heat shock. Interacts (via D domain and preferentially with hyperphosphorylated form) with MAPK3; this interaction occurs upon heat shock. Interacts with IER5 (via central region); this interaction promotes PPP2CA-induced dephosphorylation on Ser-121, Ser-307, Ser-314 and Thr-323 and HSF1 transactivation activity. Found in a ribonucleoprotein complex composed of the HSF1 homotrimeric form, translation elongation factor eEF1A proteins and non-coding RNA heat shock RNA-1 (HSR1); this complex occurs upon heat shock and stimulates HSF1 DNA-binding activity. Interacts (via transactivation domain) with HSPA1A/HSP70 and DNAJB1; these interactions result in the inhibition of heat shock- and HSF1-induced transcriptional activity during the attenuation and recovery phase from heat shock. Interacts (via Ser-303 and Ser-307 phosphorylated form) with YWHAE; this interaction promotes HSF1 sequestration in the cytoplasm in an ERK-dependent manner. Found in a complex with IER5 and PPP2CA. Interacts with TPR; this interaction increases upon heat shock and stimulates export of HSP70 mRNA. Interacts with SYMPK (via N-terminus) and CSTF2; these interactions occur upon heat shock. Interacts (via transactivation domain) with HSPA8. Interacts with EEF1D; this interaction occurs at heat shock promoter element (HSE) sequences. Interacts with MAPKAPK2. Interacts with PRKACA/PKA. Interacts (via transactivation domain) with GTF2A2. Interacts (via transactivation domain) with GTF2B. Interacts (via transactivation domain) with TBP. Interacts with CDK9, CCNT1 and EP300. Interacts (via N-terminus) with XRCC5 (via N-terminus) and XRCC6 (via N-terminus); these interactions are direct and prevent XRCC5/XRCC6 heterodimeric binding and non-homologous end joining (NHEJ) repair activities induced by ionizing radiation (IR). Interacts with PLK1; this interaction occurs during the early mitotic period, increases upon heat shock but does not modulate neither HSF1 homotrimerization and DNA-binding activities. Interacts (via Ser-216 phosphorylated form) with CDC20; this interaction occurs in mitosis in a MAD2L1-dependent manner and prevents PLK1-stimulated degradation of HSF1 by blocking the recruitment of the SCF(BTRC) ubiquitin ligase complex. Interacts with MAD2L1; this interaction occurs in mitosis. Interacts with BTRC; this interaction occurs during mitosis, induces its ubiquitin-dependent degradation following stimulus-dependent phosphorylation at Ser-216, a process inhibited by CDC20. Interacts with HSP90AA1 and HSP90AB1. Forms a complex with TTC5/STRAP and p300/EP300; these interactions augment chromatin-bound HSF1 and p300/EP300 histone acetyltransferase activity. Post-translationally, phosphorylated. Phosphorylated in unstressed cells; this phosphorylation is constitutive and implicated in the repression of HSF1 transcriptional activity. Phosphorylated on Ser-121 by MAPKAPK2; this phosphorylation promotes interaction with HSP90 proteins and inhibits HSF1 homotrimerization, DNA-binding and transactivation activities. Phosphorylation on Ser-303 by GSK3B/GSK3-beat and on Ser-307 by MAPK3 within the regulatory domain is involved in the repression of HSF1 transcriptional activity and occurs in a RAF1-dependent manner. Phosphorylation on Ser-303 and Ser-307 increases HSF1 nuclear export in a YWHAE- and XPO1/CRM1-dependent manner. Phosphorylation on Ser-307 is a prerequisite for phosphorylation on Ser-303. According to, Ser-303 is not phosphorylated in unstressed cells. Phosphorylated on Ser-415 by PLK1; phosphorylation promotes nuclear translocation upon heat shock. Hyperphosphorylated upon heat shock and during the attenuation and recovery phase period of the heat shock response. Phosphorylated on Thr-142; this phosphorylation increases HSF1 transactivation activity upon heat shock. Phosphorylation on Ser-230 by CAMK2A; this phosphorylation enhances HSF1 transactivation activity upon heat shock. Phosphorylation on Ser-326 by MAPK12; this phosphorylation enhances HSF1 nuclear translocation, homotrimerization and transactivation activities upon heat shock. Phosphorylated on Ser-320 by PRKACA/PKA; this phosphorylation promotes nuclear localization and transcriptional activity upon heat shock. Phosphorylated by MAPK8; this phosphorylation occurs upon heat shock, induces HSF1 translocation into nuclear stress bodies and negatively regulates transactivation activity. Neither basal nor stress-inducible phosphorylation on Ser-230, Ser-292, Ser-303, Ser-307, Ser-314, Ser-319, Ser-320, Thr-323, Ser-326, Ser-338, Ser-345, Ser-364 and Thr-365 within the regulatory domain is involved in the regulation of HSF1 subcellular localization or DNA-binding activity; however, it negatively regulates HSF1 transactivation activity. Phosphorylated on Ser-216 by PLK1 in the early mitotic period; this phosphorylation regulates HSF1 localization to the spindle pole, the recruitment of the SCF(BTRC) ubiquitin ligase complex inducing HSF1 degradation, and hence mitotic progression. Dephosphorylated on Ser-121, Ser-307, Ser-314 and Thr-323 by phosphatase PPP2CA in an IER5-dependent manner, leading to HSF1-mediated transactivation activity. In terms of processing, sumoylated with SUMO1 and SUMO2 upon heat shock in a ERK2-dependent manner. Sumoylated by SUMO1 on Lys-298; sumoylation occurs upon heat shock and promotes its localization to nuclear stress bodies and DNA-binding activity. Phosphorylation on Ser-303 and Ser-307 is probably a prerequisite for sumoylation. Acetylated on Lys-118; this acetylation is decreased in a IER5-dependent manner. Acetylated on Lys-118, Lys-208 and Lys-298; these acetylations occur in a EP300-dependent manner. Acetylated on Lys-80; this acetylation inhibits DNA-binding activity upon heat shock. Deacetylated on Lys-80 by SIRT1; this deacetylation increases DNA-binding activity. Post-translationally, ubiquitinated by SCF(BTRC) and degraded following stimulus-dependent phosphorylation at Ser-216 by PLK1 in mitosis. Polyubiquitinated. Undergoes proteasomal degradation upon heat shock and during the attenuation and recovery phase period of the heat shock response.

The protein localises to the nucleus. It is found in the cytoplasm. Its subcellular location is the nucleoplasm. The protein resides in the perinuclear region. It localises to the cytoskeleton. The protein localises to the spindle pole. It is found in the microtubule organizing center. Its subcellular location is the centrosome. The protein resides in the chromosome. It localises to the centromere. The protein localises to the kinetochore. Functions as a stress-inducible and DNA-binding transcription factor that plays a central role in the transcriptional activation of the heat shock response (HSR), leading to the expression of a large class of molecular chaperones, heat shock proteins (HSPs), that protect cells from cellular insult damage. In unstressed cells, is present in a HSP90-containing multichaperone complex that maintains it in a non-DNA-binding inactivated monomeric form. Upon exposure to heat and other stress stimuli, undergoes homotrimerization and activates HSP gene transcription through binding to site-specific heat shock elements (HSEs) present in the promoter regions of HSP genes. Upon heat shock stress, forms a chromatin-associated complex with TTC5/STRAP and p300/EP300 to stimulate HSR transcription, therefore increasing cell survival. Activation is reversible, and during the attenuation and recovery phase period of the HSR, returns to its unactivated form. Binds to inverted 5'-NGAAN-3' pentamer DNA sequences. Binds to chromatin at heat shock gene promoters. Activates transcription of transcription factor FOXR1 which in turn activates transcription of the heat shock chaperones HSPA1A and HSPA6 and the antioxidant NADPH-dependent reductase DHRS2. Binds the promoter region upstream of exon 1 of Mpv17l to activate expression of the M-LPS isoform which is involved in metabolism of reactive oxygen species. Also serves several other functions independently of its transcriptional activity. Involved in the repression of Ras-induced transcriptional activation of the c-fos gene in heat-stressed cells. Positively regulates pre-mRNA 3'-end processing and polyadenylation of HSP70 mRNA upon heat-stressed cells in a symplekin (SYMPK)-dependent manner. Plays a role in nuclear export of stress-induced HSP70 mRNA. Plays a role in the regulation of mitotic progression. Also plays a role as a negative regulator of non-homologous end joining (NHEJ) repair activity in a DNA damage-dependent manner. Involved in stress-induced cancer cell proliferation in a IER5-dependent manner. This chain is Heat shock factor protein 1, found in Mus musculus (Mouse).